The following is a 1295-amino-acid chain: DNA-directed RNA polymerase subunit beta' (1295 aa).

Residues Cys-60, Cys-62, Cys-75, and Cys-78 each contribute to the Zn(2+) site. 3 residues coordinate Mg(2+): Asp-516, Asp-518, and Asp-520. Residues Cys-841, Cys-914, Cys-921, and Cys-924 each contribute to the Zn(2+) site.

This sequence belongs to the RNA polymerase beta' chain family. As to quaternary structure, the RNAP catalytic core consists of 2 alpha, 1 beta, 1 beta' and 1 omega subunit. When a sigma factor is associated with the core the holoenzyme is formed, which can initiate transcription. Requires Mg(2+) as cofactor. The cofactor is Zn(2+).

The catalysed reaction is RNA(n) + a ribonucleoside 5'-triphosphate = RNA(n+1) + diphosphate. Functionally, DNA-dependent RNA polymerase catalyzes the transcription of DNA into RNA using the four ribonucleoside triphosphates as substrates. This chain is DNA-directed RNA polymerase subunit beta', found in Dehalococcoides mccartyi (strain ATCC BAA-2100 / JCM 16839 / KCTC 5957 / BAV1).